The sequence spans 449 residues: UDP-N-acetylmuramoylalanine--D-glutamate ligase (449 aa).

Residue 113 to 119 coordinates ATP; sequence GTNGKTT.

Belongs to the MurCDEF family.

It is found in the cytoplasm. The enzyme catalyses UDP-N-acetyl-alpha-D-muramoyl-L-alanine + D-glutamate + ATP = UDP-N-acetyl-alpha-D-muramoyl-L-alanyl-D-glutamate + ADP + phosphate + H(+). The protein operates within cell wall biogenesis; peptidoglycan biosynthesis. Cell wall formation. Catalyzes the addition of glutamate to the nucleotide precursor UDP-N-acetylmuramoyl-L-alanine (UMA). The protein is UDP-N-acetylmuramoylalanine--D-glutamate ligase of Gloeothece citriformis (strain PCC 7424) (Cyanothece sp. (strain PCC 7424)).